A 711-amino-acid polypeptide reads, in one-letter code: Denticleless protein homolog B (711 aa).

WD repeat units follow at residues 47–89 (GRAV…MQRL), 96–135 (AHTNAVFDIAWVPGEHKLVTASGDQTAKLWDVKAGELIGE), and 138–178 (GHQC…KDGF). The short motif at 168–171 (WDTR) is the DDB1-binding motif element. The Nuclear localization signal motif lies at 197-204 (PSKVKKRK). WD repeat units follow at residues 215-254 (DSQQSVTVVIFQDEYTVISAGAVDGVVKIWDLRKNYSTYR), 270-309 (TRKLGYSSLVLDPTGTNLFASCTDDNVYMFNATGLKTDPV), 314-355 (GHQN…AAPI), and 359-398 (GHCQEVTSVAWCQSDFTKIATCSDDNTVRIWRLNRSSEDS). A DDB1-binding motif motif is present at residues 244–247 (WDLR). Disordered stretches follow at residues 473 to 524 (QTPK…AFTP) and 601 to 698 (EFDQ…TPGS). 2 stretches are compositionally biased toward polar residues: residues 504-516 (TPKSSKGTDSKTP) and 606-627 (LSPSPSTSLHMNATDNPPTLSP). Residues 631–642 (MKSDFVDKENSS) show a composition bias toward basic and acidic residues. Residues 658–675 (DNSSPQFKSSSSPSSRNS) are compositionally biased toward low complexity. Over residues 684 to 697 (NAPNSPVSVPTTPG) the composition is skewed to polar residues.

Belongs to the WD repeat cdt2 family. Component of the DCX(DTL) E3 ubiquitin ligase complex, at least composed of cul4 (cul4a or cul4b), ddb1, dtl/cdt2 and rbx1.

It is found in the nucleus. It localises to the cytoplasm. The protein localises to the cytoskeleton. The protein resides in the microtubule organizing center. Its subcellular location is the centrosome. It is found in the chromosome. Its pathway is protein modification; protein ubiquitination. Substrate-specific adapter of a DCX (DDB1-CUL4-X-box) E3 ubiquitin-protein ligase complex required for cell cycle control, DNA damage response and translesion DNA synthesis. The DCX(DTL) complex, also named CRL4(CDT2) complex, mediates the polyubiquitination and subsequent degradation of CDT1, CDKN1A/p21(CIP1), KMT5A and SDE2. CDT1 degradation in response to DNA damage is necessary to ensure proper cell cycle regulation of DNA replication. CDKN1A/p21(CIP1) degradation during S phase or following UV irradiation is essential to control replication licensing. KMT5A degradation is also important for a proper regulation of mechanisms such as TGF-beta signaling, cell cycle progression, DNA repair and cell migration. Most substrates require their interaction with PCNA for their polyubiquitination: substrates interact with PCNA via their PIP-box, and those containing the 'K+4' motif in the PIP box, recruit the DCX(DTL) complex, leading to their degradation. In undamaged proliferating cells, the DCX(DTL) complex also promotes the 'Lys-164' monoubiquitination of PCNA, thereby being involved in PCNA-dependent translesion DNA synthesis. May play a role in the regulation of the circadian clock. The protein is Denticleless protein homolog B (dtl-b) of Xenopus laevis (African clawed frog).